A 387-amino-acid polypeptide reads, in one-letter code: N-acetyldiaminopimelate deacetylase (387 aa).

The active site involves D75. The Proton acceptor role is filled by E134.

The protein belongs to the peptidase M20A family. N-acetyldiaminopimelate deacetylase subfamily.

It carries out the reaction N-acetyl-(2S,6S)-2,6-diaminopimelate + H2O = (2S,6S)-2,6-diaminopimelate + acetate. Its pathway is amino-acid biosynthesis; L-lysine biosynthesis via DAP pathway; LL-2,6-diaminopimelate from (S)-tetrahydrodipicolinate (acetylase route): step 3/3. Functionally, catalyzes the conversion of N-acetyl-diaminopimelate to diaminopimelate and acetate. This chain is N-acetyldiaminopimelate deacetylase, found in Leuconostoc citreum (strain KM20).